An 860-amino-acid polypeptide reads, in one-letter code: Mycobactin import ATP-binding/permease protein IrtA (860 aa).

At 1 to 293 the chain is on the cytoplasmic side; the sequence is MARGIQGVMM…GRLLAPLKTT (293 aa). Residues 15–124 form the FAD-binding FR-type domain; that stretch reads ARDHQATVVS…LGSAGFSVPE (110 aa). Residues 70-73, 87-91, 97-98, and 238-240 contribute to the FAD site; these read RAYT, DVVLH, AS, and TEG. The segment at 242–275 is disordered; the sequence is AMGTKRGDDDKTPEVNPAPRADKPEAPAPAAAGR. The helical transmembrane segment at 294–314 threads the bilayer; sequence LIISGVLQAIITLVQLAPFVL. An ABC transmembrane type-1 domain is found at 295–577; the sequence is IISGVLQAII…IAYGLGGIRG (283 aa). At 315–335 the chain is on the periplasmic side; the sequence is LVELARLLLSGASSDRLWTLG. Residues 336–356 traverse the membrane as a helical segment; sequence VVAISLLGTGSFLAAALTLWL. Over 357 to 409 the chain is Cytoplasmic; it reads HLVDARFARDLRTGLLTKMSRLPLGWFTARGSGSIKQLVQDDTLSLHYLITHA. Residues 410–430 form a helical membrane-spanning segment; sequence IPDAVAAVIAPVAVLVYLFVV. At 431 to 433 the chain is on the periplasmic side; it reads DWR. Residues 434–454 traverse the membrane as a helical segment; it reads LALVMFVPVLIYLVLMTVMTI. The Cytoplasmic portion of the chain corresponds to 455 to 525; that stretch reads QSGPKIAQSQ…KKSMMDLVTR (71 aa). The helical transmembrane segment at 526–546 threads the bilayer; it reads PGTFLWLIVAVGTPMITSGAM. At 547 to 550 the chain is on the periplasmic side; it reads DPVD. Residues 551–571 form a helical membrane-spanning segment; that stretch reads ILPFLLLGTTFGVRLLGIAYG. Residues 572–860 lie on the Cytoplasmic side of the membrane; the sequence is LGGIRGGMLA…AAGPTGEAVR (289 aa). The region spanning 609-842 is the ABC transporter domain; that stretch reads VVFDNVTFGY…AGRYRQLWET (234 aa). 642 to 649 is an ATP binding site; the sequence is GPSGSGKS.

It belongs to the ABC transporter superfamily. Siderophore-Fe(3+) uptake transporter (SIUT) (TC 3.A.1.21) family. Forms a heterodimer with IrtB. Requires FAD as cofactor.

Its subcellular location is the cell inner membrane. Functionally, part of the ABC transporter complex IrtAB involved in the import of iron-bound mycobactin (Fe-MBT) and carboxymycobactin (Fe-cMBT). Has a preference for Fe-MBT over Fe-cMBT. Mycobactins are then reduced by the siderophore interaction domain to facilitate iron release in the bacterial cell. Transmembrane domains (TMD) form a pore in the membrane and the ATP-binding domain (NBD) is responsible for energy generation. This is Mycobactin import ATP-binding/permease protein IrtA from Mycolicibacterium smegmatis (strain ATCC 700084 / mc(2)155) (Mycobacterium smegmatis).